The primary structure comprises 340 residues: Ketol-acid reductoisomerase (NADP(+)) (340 aa).

The KARI N-terminal Rossmann domain occupies 3–182 (VQMEYEKDVK…GAARVGLLET (180 aa)). NADP(+) is bound by residues 26 to 29 (YGSQ), Arg-49, Ser-53, and 83 to 86 (DEIQ). The active site involves His-108. Position 134 (Gly-134) interacts with NADP(+). The 146-residue stretch at 183 to 328 (TYKEETEEDL…AELRKAMPFV (146 aa)) folds into the KARI C-terminal knotted domain. Asp-191, Glu-195, Glu-227, and Glu-231 together coordinate Mg(2+). Residue Ser-252 participates in substrate binding.

The protein belongs to the ketol-acid reductoisomerase family. It depends on Mg(2+) as a cofactor.

The enzyme catalyses (2R)-2,3-dihydroxy-3-methylbutanoate + NADP(+) = (2S)-2-acetolactate + NADPH + H(+). It carries out the reaction (2R,3R)-2,3-dihydroxy-3-methylpentanoate + NADP(+) = (S)-2-ethyl-2-hydroxy-3-oxobutanoate + NADPH + H(+). Its pathway is amino-acid biosynthesis; L-isoleucine biosynthesis; L-isoleucine from 2-oxobutanoate: step 2/4. The protein operates within amino-acid biosynthesis; L-valine biosynthesis; L-valine from pyruvate: step 2/4. Involved in the biosynthesis of branched-chain amino acids (BCAA). Catalyzes an alkyl-migration followed by a ketol-acid reduction of (S)-2-acetolactate (S2AL) to yield (R)-2,3-dihydroxy-isovalerate. In the isomerase reaction, S2AL is rearranged via a Mg-dependent methyl migration to produce 3-hydroxy-3-methyl-2-ketobutyrate (HMKB). In the reductase reaction, this 2-ketoacid undergoes a metal-dependent reduction by NADPH to yield (R)-2,3-dihydroxy-isovalerate. This chain is Ketol-acid reductoisomerase (NADP(+)), found in Streptococcus pneumoniae (strain Hungary19A-6).